Here is a 363-residue protein sequence, read N- to C-terminus: Aminomethyltransferase (363 aa).

It belongs to the GcvT family. The glycine cleavage system is composed of four proteins: P, T, L and H.

The catalysed reaction is N(6)-[(R)-S(8)-aminomethyldihydrolipoyl]-L-lysyl-[protein] + (6S)-5,6,7,8-tetrahydrofolate = N(6)-[(R)-dihydrolipoyl]-L-lysyl-[protein] + (6R)-5,10-methylene-5,6,7,8-tetrahydrofolate + NH4(+). Functionally, the glycine cleavage system catalyzes the degradation of glycine. This chain is Aminomethyltransferase, found in Staphylococcus haemolyticus (strain JCSC1435).